The chain runs to 99 residues: Small ribosomal subunit protein uS14m (99 aa).

Belongs to the universal ribosomal protein uS14 family.

The protein localises to the mitochondrion. This chain is Small ribosomal subunit protein uS14m (RPS14), found in Marchantia polymorpha (Common liverwort).